The sequence spans 370 residues: 3-isopropylmalate dehydrogenase (370 aa).

Position 77-90 (77-90) interacts with NAD(+); sequence GPKWDAVPYEVRPE. Arg97, Arg107, Arg135, and Asp226 together coordinate substrate. Residues Asp226, Asp250, and Asp254 each coordinate Mg(2+). 290 to 302 is a binding site for NAD(+); it reads GSAPDIAGTGVAN.

This sequence belongs to the isocitrate and isopropylmalate dehydrogenases family. LeuB type 1 subfamily. As to quaternary structure, homodimer. It depends on Mg(2+) as a cofactor. The cofactor is Mn(2+).

It is found in the cytoplasm. It carries out the reaction (2R,3S)-3-isopropylmalate + NAD(+) = 4-methyl-2-oxopentanoate + CO2 + NADH. It functions in the pathway amino-acid biosynthesis; L-leucine biosynthesis; L-leucine from 3-methyl-2-oxobutanoate: step 3/4. Catalyzes the oxidation of 3-carboxy-2-hydroxy-4-methylpentanoate (3-isopropylmalate) to 3-carboxy-4-methyl-2-oxopentanoate. The product decarboxylates to 4-methyl-2 oxopentanoate. The sequence is that of 3-isopropylmalate dehydrogenase from Rhizobium meliloti (strain 1021) (Ensifer meliloti).